Consider the following 224-residue polypeptide: Steroid receptor RNA activator 1 (224 aa).

Disordered stretches follow at residues Met-1–Ser-90 and Ala-201–Ser-224. 3 positions are modified to phosphoserine: Ser-48, Ser-57, and Ser-75. The segment covering Pro-58 to Pro-76 has biased composition (pro residues). Residues Ala-201–His-215 show a composition bias toward basic and acidic residues.

The protein belongs to the SRA1 family. As to quaternary structure, SRA1 RNA exists in a ribonucleoprotein complex containing NCOA1. The RNA also forms a complex with PUS1 and RARG in the nucleus. Interacts with AR. In terms of tissue distribution, highly expressed in liver and skeletal muscle and to a lesser extent in brain. Also expressed in both normal and tumorigenic breast epithelial cell lines. Significantly up-regulated in human tumors of the breast, ovary, and uterus.

Its subcellular location is the nucleus. It is found in the cytoplasm. Its function is as follows. Functional RNA which acts as a transcriptional coactivator that selectively enhances steroid receptor-mediated transactivation ligand-independently through a mechanism involving the modulating N-terminal domain (AF-1) of steroid receptors. Also mediates transcriptional coactivation of steroid receptors ligand-dependently through the steroid-binding domain (AF-2). Enhances cellular proliferation and differentiation and promotes apoptosis in vivo. May play a role in tumorigenesis. This is Steroid receptor RNA activator 1 from Homo sapiens (Human).